The following is a 1135-amino-acid chain: LRR receptor-like serine/threonine-protein kinase RGI2 (1135 aa).

A signal peptide spans 1–35 (MSLQMPIPRKKALTVSHFSITLSLFLAFFISSTSA). The Extracellular segment spans residues 36–723 (STNEVSALIS…QRGVHSHRLR (688 aa)). C69 and C76 are oxidised to a cystine. Residues N101 and N117 are each glycosylated (N-linked (GlcNAc...) asparagine). 4 LRR repeats span residues 105–129 (FTSLQKLVISNTNLTGAISSEIGDC), 130–153 (SELIVIDLSSNSLVGEIPSSLGKL), 154–177 (KNLQELCLNSNGLTGKIPPELGDC), and 179–203 (SLKNLEIFDNYLSENLPLELGKIST). Short sequence motifs (small peptide recognition) lie at residues 186-187 (FD), 208-211 (RAGG), 231-236 (VLGLAA), and Y259. LRR repeat units follow at residues 226–250 (CRNLKVLGLAATKISGSLPVSLGQL), 251–274 (SKLQSLSVYSTMLSGEIPKELGNC), 276–298 (ELINLFLYDNDLSGTLPKELGKL), 299–323 (QNLEKMLLWQNNLHGPIPEEIGFMK), 325–345 (LNAIDLSMNYFSGTIPKSFGN), 346–370 (LSNLQELMLSSNNITGSIPSILSNC), 372–395 (KLVQFQIDANQISGLIPPEIGLLK), 397–418 (LNIFLGWQNKLEGNIPDELAGC), 419–442 (QNLQALDLSQNYLTGSLPAGLFQL), 444–466 (NLTKLLLISNAISGVIPLEIGNC), 467–490 (TSLVRLRLVNNRITGEIPKGIGFL), 491–514 (QNLSFLDLSENNLSGPVPLEISNC), 516–538 (QLQMLNLSNNTLQGYLPLSLSSL), 539–562 (TKLQVLDVSSNDLTGKIPDSLGHL), 564–586 (SLNRLILSKNSFNGEIPSSLGHC), 587–610 (TNLQLLDLSSNNISGTIPEELFDI), 612–634 (DLDIALNLSWNSLDGFIPERISA), 635–658 (LNRLSVLDISHNMLSGDLSALSGL), and 659–683 (ENLVSLNISHNRFSGYLPDSKVFRQ). N273 carries an N-linked (GlcNAc...) asparagine glycan. Residues 281–283 (FLY) carry the Small peptide recognition motif. Positions 329–332 (DLSM) match the Small peptide recognition motif. The N-linked (GlcNAc...) asparagine glycan is linked to N345. The Small peptide recognition motif lies at 351–353 (ELM). N-linked (GlcNAc...) asparagine glycans are attached at residues N358 and N369. 2 consecutive short sequence motifs (small peptide recognition) follow at residues 399-403 (IFLGW) and 425-428 (DLSQ). Residue N444 is glycosylated (N-linked (GlcNAc...) asparagine). The Small peptide recognition motif lies at 447-451 (KLLLI). N465 carries an N-linked (GlcNAc...) asparagine glycan. The short motif at 471–473 (RLR) is the Small peptide recognition element. 4 N-linked (GlcNAc...) asparagine glycosylation sites follow: N492, N502, N521, and N524. N-linked (GlcNAc...) asparagine glycosylation is found at N598 and N618. N-linked (GlcNAc...) asparagine glycosylation is found at N665 and N707. Residues 724–744 (IAIGLLISVTAVLAVLGVLAV) traverse the membrane as a helical segment. Residues 745-1135 (IRAKQMIRDD…ATSNVRPNLK (391 aa)) lie on the Cytoplasmic side of the membrane. T777 carries the post-translational modification Phosphothreonine. One can recognise a Protein kinase domain in the interval 785–1066 (LVEGNVIGKG…KDVAAMLSEI (282 aa)). Residues 791 to 799 (IGKGCSGIV) and K813 each bind ATP. 2 positions are modified to phosphotyrosine: Y868 and Y907. Residue D920 is the Proton acceptor of the active site. Residues Y963 and Y970 each carry the phosphotyrosine modification. Residues 1077–1135 (DGCSGSCNNGRERGKDDSTSSVMQQTAKYLRSSSTSFSASSLLYSSSSSATSNVRPNLK) are disordered. Low complexity predominate over residues 1108–1128 (SSSTSFSASSLLYSSSSSATS).

This sequence belongs to the protein kinase superfamily. Ser/Thr protein kinase family. Binds to RGF peptides such as RGF1, GLV5/CLEL1/RGF2, GLV7/CLEL3/RGF3, GLV3/RGF4, GLV10/CLEL7/RGF5 and RGF10/CLELN; these interactions trigger the formation of heterodimers with SERK1. Interacts with UBP13. Phosphorylated and ubiquitinated upon interaction with RGF1, thus leading to activation a subsequent degradation. Stabilized by UBP12 and UBP13-mediated deubiquitination. In terms of processing, autophosphorylated. In terms of tissue distribution, specific to root meristems, especially in lateral root meristems (LRM).

The protein localises to the membrane. It catalyses the reaction L-seryl-[protein] + ATP = O-phospho-L-seryl-[protein] + ADP + H(+). The enzyme catalyses L-threonyl-[protein] + ATP = O-phospho-L-threonyl-[protein] + ADP + H(+). In terms of biological role, together with RGI1, RGI3, RGI4 and RGI5, acts as a receptor of RGF peptides (e.g. RGF1, GLV5/CLEL1/RGF2, GLV7/CLEL3/RGF3, GLV3/RGF4, GLV10/CLEL7/RGF5 and RGF10/CLELN), peptide hormones which maintain the postembryonic root stem cell niche by regulating the expression levels and patterns of the transcription factor PLETHORA (PLT, e.g. PLT1 and PLT2). Links RGF peptides signal with their downstream components. The chain is LRR receptor-like serine/threonine-protein kinase RGI2 from Arabidopsis thaliana (Mouse-ear cress).